The chain runs to 147 residues: Hemoglobin subunit gamma (147 aa).

A Globin domain is found at 3 to 147 (NFTAEDKAAI…VASALGSRYH (145 aa)). Residues H64 and H93 each coordinate heme b.

This sequence belongs to the globin family. Heterotetramer of two alpha chains and two gamma chains in fetal hemoglobin (Hb F). In terms of tissue distribution, red blood cells.

Its function is as follows. Gamma chains make up the fetal hemoglobin F, in combination with alpha chains. This is Hemoglobin subunit gamma (HBG) from Aotus azarae (Azara's night monkey).